Reading from the N-terminus, the 258-residue chain is Deoxyribose-phosphate aldolase (258 aa).

D101 functions as the Proton donor/acceptor in the catalytic mechanism. K166 acts as the Schiff-base intermediate with acetaldehyde in catalysis. Catalysis depends on K200, which acts as the Proton donor/acceptor.

This sequence belongs to the DeoC/FbaB aldolase family. DeoC type 2 subfamily.

The protein localises to the cytoplasm. It catalyses the reaction 2-deoxy-D-ribose 5-phosphate = D-glyceraldehyde 3-phosphate + acetaldehyde. It functions in the pathway carbohydrate degradation; 2-deoxy-D-ribose 1-phosphate degradation; D-glyceraldehyde 3-phosphate and acetaldehyde from 2-deoxy-alpha-D-ribose 1-phosphate: step 2/2. Catalyzes a reversible aldol reaction between acetaldehyde and D-glyceraldehyde 3-phosphate to generate 2-deoxy-D-ribose 5-phosphate. This chain is Deoxyribose-phosphate aldolase, found in Actinobacillus pleuropneumoniae serotype 7 (strain AP76).